We begin with the raw amino-acid sequence, 2498 residues long: PKS-NRPS hybrid synthetase acdB (2498 aa).

The adenylation (A) domain stretch occupies residues Phe-34–Arg-427. A Carrier 1 domain is found at Gln-531–Asp-606. The residue at position 566 (Ser-566) is an O-(pantetheine 4'-phosphoryl)serine. In terms of domain architecture, Ketosynthase family 3 (KS3) spans Ser-627–Glu-1058. Active-site for beta-ketoacyl synthase activity residues include Cys-802, His-938, and His-979. The interval Leu-1165–His-1485 is malonyl-CoA:ACP transacylase (MAT) domain. The ketoreductase (KR) domain stretch occupies residues Gly-1739–Leu-1917. The Carrier 2 domain occupies Glu-2017–Leu-2092. At Ser-2052 the chain carries O-(pantetheine 4'-phosphoryl)serine. The tract at residues Val-2149 to Ile-2378 is thioester reductase (TE) domain.

The protein in the C-terminal section; belongs to the NRP synthetase family. Requires pantetheine 4'-phosphate as cofactor.

It participates in secondary metabolite biosynthesis. Its function is as follows. PKS-NRPS hybrid synthetase; part of the gene cluster that mediates the biosynthesis of aspcandine, a pyrrolobenzazepine alkaloid. Initially, the indoleamine 2,3-dioxygenase acdA accepts L-tryptophan and performs the oxidative opening of the indole ring to yield N'-formyl-L-kynurenine, which undergoes the spontaneous deformylation reaction to provide L-kynurenine. The kynurenine 3-monooxygenase acdD then hydroxylates L-kynurenine to afford 3-hydroxy-L-kynurenine. 3-hydroxy-L-kynurenine is activated by the A domain of the NRPS-PKS acdB and subsequently loaded onto the enzyme. The KS domain conducts the decarboxylative condensation of the 3-hydroxy-L-kynurenyl and malonyl moieties, and subsequent nucleophilic attacks by the two amino groups would occur nonenzymatically at two distinct positions, achieving the chain release and the construction of the tricyclic system. Finally, a dehydration reaction completes the biosynthesis to yield aspcandine. The protein is PKS-NRPS hybrid synthetase acdB of Aspergillus candidus.